The sequence spans 91 residues: Probable Fe(2+)-trafficking protein (91 aa).

It belongs to the Fe(2+)-trafficking protein family.

Could be a mediator in iron transactions between iron acquisition and iron-requiring processes, such as synthesis and/or repair of Fe-S clusters in biosynthetic enzymes. The polypeptide is Probable Fe(2+)-trafficking protein (Acidobacterium capsulatum (strain ATCC 51196 / DSM 11244 / BCRC 80197 / JCM 7670 / NBRC 15755 / NCIMB 13165 / 161)).